Here is a 335-residue protein sequence, read N- to C-terminus: Nucleoid-associated protein PP_0973 (335 aa).

The protein belongs to the YejK family.

Its subcellular location is the cytoplasm. The protein localises to the nucleoid. This is Nucleoid-associated protein PP_0973 from Pseudomonas putida (strain ATCC 47054 / DSM 6125 / CFBP 8728 / NCIMB 11950 / KT2440).